The sequence spans 363 residues: Mannose-1-phosphate guanyltransferase (363 aa).

The protein belongs to the transferase hexapeptide repeat family.

Its subcellular location is the cytoplasm. The enzyme catalyses alpha-D-mannose 1-phosphate + GTP + H(+) = GDP-alpha-D-mannose + diphosphate. It functions in the pathway nucleotide-sugar biosynthesis; GDP-alpha-D-mannose biosynthesis; GDP-alpha-D-mannose from alpha-D-mannose 1-phosphate (GTP route): step 1/1. Its function is as follows. Involved in cell wall synthesis where it is required for glycosylation. Involved in cell cycle progression through cell-size checkpoint. In Yarrowia lipolytica (strain CLIB 122 / E 150) (Yeast), this protein is Mannose-1-phosphate guanyltransferase (MPG1).